Reading from the N-terminus, the 98-residue chain is Feather keratin 1 (98 aa).

Belongs to the avian keratin family. As to quaternary structure, the avian keratins (F-ker, S-ker, C-ker and B-ker) are a complex mixture of very similar polypeptides.

The polypeptide is Feather keratin 1 (Gallus gallus (Chicken)).